The chain runs to 271 residues: Probable L,D-transpeptidase 3 (271 aa).

Residues Val-127–Gln-270 form the L,D-TPase catalytic domain. His-228 acts as the Proton donor/acceptor in catalysis. Cys-246 functions as the Nucleophile in the catalytic mechanism.

Its pathway is cell wall biogenesis; peptidoglycan biosynthesis. Is irreversibly inactivated by the beta-lactam carbapenems via the formation of a covalent adduct resulting from acylation of the catalytic Cys. Imipenem is the most efficient drug for in vitro LdtMt3/Rv1433 inactivation. In terms of biological role, probable L,D-transpeptidase that may perform as-yet-unknown cross-linking reactions in M.tuberculosis. Is not able to generate 3-&gt;3 cross-links in peptidoglycan, using tetrapeptide stems as acyl donor substrates. May function in the anchoring of proteins to peptidoglycan. This chain is Probable L,D-transpeptidase 3, found in Mycobacterium tuberculosis (strain ATCC 25618 / H37Rv).